The primary structure comprises 179 residues: Sec-independent protein translocase protein TatB (179 aa).

Residues Met-1–Gly-21 traverse the membrane as a helical segment. 2 stretches are compositionally biased toward basic and acidic residues: residues Lys-75–Ala-86 and Thr-94–Ala-106. The disordered stretch occupies residues Lys-75–Gln-179.

This sequence belongs to the TatB family. In terms of assembly, the Tat system comprises two distinct complexes: a TatABC complex, containing multiple copies of TatA, TatB and TatC subunits, and a separate TatA complex, containing only TatA subunits. Substrates initially bind to the TatABC complex, which probably triggers association of the separate TatA complex to form the active translocon.

The protein localises to the cell inner membrane. Functionally, part of the twin-arginine translocation (Tat) system that transports large folded proteins containing a characteristic twin-arginine motif in their signal peptide across membranes. Together with TatC, TatB is part of a receptor directly interacting with Tat signal peptides. TatB may form an oligomeric binding site that transiently accommodates folded Tat precursor proteins before their translocation. The chain is Sec-independent protein translocase protein TatB from Alkalilimnicola ehrlichii (strain ATCC BAA-1101 / DSM 17681 / MLHE-1).